Here is a 308-residue protein sequence, read N- to C-terminus: 4-diphosphocytidyl-2-C-methyl-D-erythritol kinase (308 aa).

Residue lysine 23 is part of the active site. Residue 108-118 (PVAAGIGGGSA) coordinates ATP. Aspartate 150 is an active-site residue.

It belongs to the GHMP kinase family. IspE subfamily.

The enzyme catalyses 4-CDP-2-C-methyl-D-erythritol + ATP = 4-CDP-2-C-methyl-D-erythritol 2-phosphate + ADP + H(+). It functions in the pathway isoprenoid biosynthesis; isopentenyl diphosphate biosynthesis via DXP pathway; isopentenyl diphosphate from 1-deoxy-D-xylulose 5-phosphate: step 3/6. Catalyzes the phosphorylation of the position 2 hydroxy group of 4-diphosphocytidyl-2C-methyl-D-erythritol. This chain is 4-diphosphocytidyl-2-C-methyl-D-erythritol kinase, found in Nitrobacter winogradskyi (strain ATCC 25391 / DSM 10237 / CIP 104748 / NCIMB 11846 / Nb-255).